A 185-amino-acid chain; its full sequence is uncharacterized protein (185 aa).

N-acetylmethionine is present on M1. Composition is skewed to basic and acidic residues over residues 1 to 18 (MDAFSLKKDNRKKFQDKQ), 26 to 47 (TPSDRKYRLLNRQKEEKATTEE), and 59 to 71 (SNEDRYYEDPVLE). 2 disordered regions span residues 1–71 (MDAF…PVLE) and 155–185 (DHDRAGKKISAPSTDLPEELETDQDFLDGLL). Over residues 170-185 (LPEELETDQDFLDGLL) the composition is skewed to acidic residues.

This is an uncharacterized protein from Saccharomyces cerevisiae (strain ATCC 204508 / S288c) (Baker's yeast).